A 244-amino-acid polypeptide reads, in one-letter code: Small ribosomal subunit protein eS6 (244 aa).

Positions 185 to 244 are disordered; the sequence is RLQRKRHMRAVKRRRYAKQREEEATYAKLLAKRKKEEREAHAKRRSSARESSLRESKSKA. Positions 186–201 are enriched in basic residues; sequence LQRKRHMRAVKRRRYA. A compositionally biased stretch (basic and acidic residues) spans 231–244; that stretch reads SARESSLRESKSKA.

This sequence belongs to the eukaryotic ribosomal protein eS6 family. Post-translationally, ribosomal protein S6 is the major substrate of protein kinases in eukaryote ribosomes.

Functionally, component of the 40S small ribosomal subunit. Plays an important role in controlling cell growth and proliferation through the selective translation of particular classes of mRNA. In Branchiostoma floridae (Florida lancelet), this protein is Small ribosomal subunit protein eS6 (RPS6).